A 386-amino-acid chain; its full sequence is EARP and GARP complex-interacting protein 1 (386 aa).

The residue at position 1 (methionine 1) is an N-acetylmethionine. WD repeat units follow at residues 132 to 172 (GAQG…SQAV), 182 to 222 (RGQL…QIYC), 226 to 266 (AHGQ…EPVK), and 270 to 310 (EHSH…SEPF). Residues 312-332 (HLVDDDDVSDPEEHHTEKSKE) are disordered. A Phosphoserine modification is found at serine 320. Over residues 322 to 332 (PEEHHTEKSKE) the composition is skewed to basic and acidic residues. Residues 344 to 384 (EHEDSVYAVDWASADPWLFASLSYDGRLVINRVPRALKYHI) form a WD 5 repeat.

The protein belongs to the WD repeat EIPR1 family. Interacts with two multisubunit tethering complexes: EARP composed of VPS50, VPS51, VPS52 and VPS53 subunits and GARP complex composed of VPS51, VPS52, VPS53 and VPS54 subunits. Interacts with SNAP29. As to expression, ubiquitous. Highly expressed in brain, adipose tissue, spleen and kidney (at protein level).

It localises to the golgi apparatus. The protein localises to the trans-Golgi network. In terms of biological role, acts as a component of endosomal retrieval machinery that is involved in protein transport from early endosomes to either recycling endosomes or the trans-Golgi network. Mediates the recruitment of Golgi-associated retrograde protein (GARP) complex to the trans-Golgi network and controls early endosome-to-Golgi transport of internalized protein. Promotes the recycling of internalized transferrin receptor (TFRC) to the plasma membrane through interaction with endosome-associated recycling protein (EARP) complex. Controls proper insulin distribution and secretion, and retention of cargo in mature dense core vesicles. Required for the stability of the endosome-associated retrograde protein (EARP) complex subunits and for proper localization and association of EARP with membranes. This Rattus norvegicus (Rat) protein is EARP and GARP complex-interacting protein 1.